The sequence spans 638 residues: Paramyosin (638 aa).

Residues F1–D638 are a coiled coil.

Belongs to the paramyosin family. Homodimer.

It is found in the cytoplasm. It localises to the myofibril. In terms of biological role, paramyosin is a major structural component of many thick filaments isolated from invertebrate muscles. The polypeptide is Paramyosin (Opisthorchis felineus).